The chain runs to 322 residues: Serine/threonine-protein phosphatase PP1-2 (322 aa).

Residues Asp-60, His-62, Asp-88, and Asn-120 each coordinate Mn(2+). His-121 serves as the catalytic Proton donor. 2 residues coordinate Mn(2+): His-169 and His-244. Residues 298–322 are disordered; sequence RQRVSQSSIKESKSATNSLKKSKNN. A compositionally biased stretch (polar residues) spans 301–316; it reads VSQSSIKESKSATNSL.

This sequence belongs to the PPP phosphatase family. PP-1 subfamily. The cofactor is Mn(2+).

The catalysed reaction is O-phospho-L-seryl-[protein] + H2O = L-seryl-[protein] + phosphate. The enzyme catalyses O-phospho-L-threonyl-[protein] + H2O = L-threonyl-[protein] + phosphate. Its function is as follows. Essential role in cell cycle control. PP1 is perhaps required for exit from mitosis. In Schizosaccharomyces pombe (strain 972 / ATCC 24843) (Fission yeast), this protein is Serine/threonine-protein phosphatase PP1-2 (sds21).